Here is a 176-residue protein sequence, read N- to C-terminus: Ribosome maturation factor RimM (176 aa).

A PRC barrel domain is found at 93-166 (EGEYYHADLI…RVVIELPAEI (74 aa)).

This sequence belongs to the RimM family. In terms of assembly, binds ribosomal protein uS19.

The protein resides in the cytoplasm. In terms of biological role, an accessory protein needed during the final step in the assembly of 30S ribosomal subunit, possibly for assembly of the head region. Essential for efficient processing of 16S rRNA. May be needed both before and after RbfA during the maturation of 16S rRNA. It has affinity for free ribosomal 30S subunits but not for 70S ribosomes. This chain is Ribosome maturation factor RimM, found in Rhodopseudomonas palustris (strain BisB18).